A 94-amino-acid polypeptide reads, in one-letter code: Co-chaperonin GroES (94 aa).

This sequence belongs to the GroES chaperonin family. In terms of assembly, heptamer of 7 subunits arranged in a ring. Interacts with the chaperonin GroEL.

It localises to the cytoplasm. Functionally, together with the chaperonin GroEL, plays an essential role in assisting protein folding. The GroEL-GroES system forms a nano-cage that allows encapsulation of the non-native substrate proteins and provides a physical environment optimized to promote and accelerate protein folding. GroES binds to the apical surface of the GroEL ring, thereby capping the opening of the GroEL channel. This is Co-chaperonin GroES from Clostridium perfringens (strain ATCC 13124 / DSM 756 / JCM 1290 / NCIMB 6125 / NCTC 8237 / Type A).